The chain runs to 300 residues: Ribosomal RNA small subunit methyltransferase H (300 aa).

Residues 46–48 (GGH), D65, F92, D107, and Q114 contribute to the S-adenosyl-L-methionine site.

The protein belongs to the methyltransferase superfamily. RsmH family.

It localises to the cytoplasm. The catalysed reaction is cytidine(1402) in 16S rRNA + S-adenosyl-L-methionine = N(4)-methylcytidine(1402) in 16S rRNA + S-adenosyl-L-homocysteine + H(+). In terms of biological role, specifically methylates the N4 position of cytidine in position 1402 (C1402) of 16S rRNA. The polypeptide is Ribosomal RNA small subunit methyltransferase H (Prochlorococcus marinus (strain MIT 9215)).